Consider the following 169-residue polypeptide: Peptide methionine sulfoxide reductase MsrA (169 aa).

Residue Cys-10 is part of the active site.

The protein belongs to the MsrA Met sulfoxide reductase family.

It carries out the reaction L-methionyl-[protein] + [thioredoxin]-disulfide + H2O = L-methionyl-(S)-S-oxide-[protein] + [thioredoxin]-dithiol. It catalyses the reaction [thioredoxin]-disulfide + L-methionine + H2O = L-methionine (S)-S-oxide + [thioredoxin]-dithiol. Functionally, has an important function as a repair enzyme for proteins that have been inactivated by oxidation. Catalyzes the reversible oxidation-reduction of methionine sulfoxide in proteins to methionine. The sequence is that of Peptide methionine sulfoxide reductase MsrA from Streptococcus equi subsp. equi (strain 4047).